Reading from the N-terminus, the 616-residue chain is Chaperone protein HscA homolog (616 aa).

This sequence belongs to the heat shock protein 70 family.

Its function is as follows. Chaperone involved in the maturation of iron-sulfur cluster-containing proteins. Has a low intrinsic ATPase activity which is markedly stimulated by HscB. The chain is Chaperone protein HscA homolog from Vibrio atlanticus (strain LGP32) (Vibrio splendidus (strain Mel32)).